We begin with the raw amino-acid sequence, 238 residues long: Uridylate kinase (238 aa).

12-15 contributes to the ATP binding site; sequence KLSG. Position 54 (Gly-54) interacts with UMP. The ATP site is built by Gly-55 and Arg-59. Residues Asp-74 and 135-142 each bind UMP; that span reads TGNPFFTT. ATP-binding residues include Thr-162, Tyr-168, and Asp-171.

This sequence belongs to the UMP kinase family. Homohexamer.

The protein localises to the cytoplasm. It carries out the reaction UMP + ATP = UDP + ADP. The protein operates within pyrimidine metabolism; CTP biosynthesis via de novo pathway; UDP from UMP (UMPK route): step 1/1. Inhibited by UTP. In terms of biological role, catalyzes the reversible phosphorylation of UMP to UDP. This chain is Uridylate kinase, found in Azoarcus sp. (strain BH72).